Consider the following 317-residue polypeptide: Melanocyte-stimulating hormone receptor (317 aa).

The Extracellular segment spans residues 1–37 (MPVQGSQRRLLGSLNSTPTATPHLGLAANQTGARCLE). The N-linked (GlcNAc...) asparagine glycan is linked to Asn-29. Residues 38-63 (VSVPDGLFLSLGLVSLVENVLVVTAI) form a helical membrane-spanning segment. Residues 64-72 (AKNRNLHSP) lie on the Cytoplasmic side of the membrane. A helical membrane pass occupies residues 73–93 (MYCFICCLALSDLLVSGSNML). Residues 94 to 118 (ETAVTLLLEAGALAARAAVVQQLDN) are Extracellular-facing. Residues 119–140 (VIDVITCSSMLSSLCFLGAIAV) form a helical membrane-spanning segment. The Cytoplasmic portion of the chain corresponds to 141–163 (DRYISIFYALRYHSIVTLPRARR). Residues 164–183 (AVAAIWVASVLCSTLFIAYY) traverse the membrane as a helical segment. Residues 184-191 (DHAAVLLC) are Extracellular-facing. Residues 192 to 211 (LVVFFLAMLVLMAVLYVHML) form a helical membrane-spanning segment. The Cytoplasmic portion of the chain corresponds to 212-240 (ARACQHAQGIARLHKRQRLAHQGFGLKGA). The helical transmembrane segment at 241–266 (ATLTILLGIFFLCWGPFFLHLTLIVL) threads the bilayer. Topologically, residues 267–279 (CPQHPTCSCIFKN) are extracellular. Residues 280–300 (FNLFLALIICNAIIDPLIYAF) traverse the membrane as a helical segment. At 301–317 (RSQELRRTLKEVLLCSW) the chain is on the cytoplasmic side. Cys-315 carries S-palmitoyl cysteine lipidation.

It belongs to the G-protein coupled receptor 1 family. Interacts with MGRN1, but does not undergo MGRN1-mediated ubiquitination; this interaction competes with GNAS-binding and thus inhibits agonist-induced cAMP production. Interacts with OPN3; the interaction results in a decrease in MC1R-mediated cAMP signaling and ultimately a decrease in melanin production in melanocytes.

It localises to the cell membrane. In terms of biological role, receptor for MSH (alpha, beta and gamma) and ACTH. The activity of this receptor is mediated by G proteins which activate adenylate cyclase. Mediates melanogenesis, the production of eumelanin (black/brown) and phaeomelanin (red/yellow), via regulation of cAMP signaling in melanocytes. The chain is Melanocyte-stimulating hormone receptor (MC1R) from Macaca sylvanus (Barbary macaque).